The following is a 188-amino-acid chain: ATP synthase subunit delta (188 aa).

This sequence belongs to the ATPase delta chain family. As to quaternary structure, F-type ATPases have 2 components, F(1) - the catalytic core - and F(0) - the membrane proton channel. F(1) has five subunits: alpha(3), beta(3), gamma(1), delta(1), epsilon(1). F(0) has three main subunits: a(1), b(2) and c(10-14). The alpha and beta chains form an alternating ring which encloses part of the gamma chain. F(1) is attached to F(0) by a central stalk formed by the gamma and epsilon chains, while a peripheral stalk is formed by the delta and b chains.

It localises to the cell inner membrane. Functionally, f(1)F(0) ATP synthase produces ATP from ADP in the presence of a proton or sodium gradient. F-type ATPases consist of two structural domains, F(1) containing the extramembraneous catalytic core and F(0) containing the membrane proton channel, linked together by a central stalk and a peripheral stalk. During catalysis, ATP synthesis in the catalytic domain of F(1) is coupled via a rotary mechanism of the central stalk subunits to proton translocation. Its function is as follows. This protein is part of the stalk that links CF(0) to CF(1). It either transmits conformational changes from CF(0) to CF(1) or is implicated in proton conduction. This is ATP synthase subunit delta from Rhizobium johnstonii (strain DSM 114642 / LMG 32736 / 3841) (Rhizobium leguminosarum bv. viciae).